The chain runs to 421 residues: AA11 family lytic polysaccharide monooxygenase (421 aa).

A signal peptide spans 1–19; it reads MFSKAFLSAALLGAAAVEG. Positions 20, 79, and 93 each coordinate Cu(+). 3 disulfides stabilise this stretch: cysteine 48–cysteine 162, cysteine 84–cysteine 110, and cysteine 201–cysteine 235. Residue asparagine 117 is glycosylated (N-linked (GlcNAc...) asparagine). Positions 231–349 are disordered; the sequence is GSQACTGTPT…SSSSSSSGAL (119 aa). Residues 247-285 are compositionally biased toward low complexity; the sequence is TAGSSGSSGSSSGSSSGGSSSSAAGSGATAPPAPAVSST. Over residues 304–314 the composition is skewed to polar residues; sequence SPAQPTHTSAP. The segment covering 315–349 has biased composition (low complexity); the sequence is SGGSSSGSGSSSGSNSGSSSGSSSSSSSSSSSGAL.

This sequence belongs to the polysaccharide monooxygenase AA11 family. It depends on Cu(2+) as a cofactor.

Functionally, lytic polysaccharide monooxygenase (LPMO) that depolymerizes chitin via the oxidation of scissile beta-(1-4)-glycosidic bonds, yielding C1 or C4 oxidation products. Catalysis by LPMOs requires the reduction of the active-site copper from Cu(II) to Cu(I) by a reducing agent and H(2)O(2) or O(2) as a cosubstrate. Active on chitin but has no activity on other substrates, including diverse mannans, cellulose and starch (data not shown). Primary chain cleavage yields predominantly aldonic acid oligosaccharides with even-numbered degrees of polymerization. The polypeptide is AA11 family lytic polysaccharide monooxygenase (Aspergillus oryzae (strain ATCC 42149 / RIB 40) (Yellow koji mold)).